The sequence spans 119 residues: Methylglyoxal synthase (119 aa).

The MGS-like domain occupies 1 to 119; sequence MKIALIAHDK…ESAKLIMADI (119 aa). Residues His-8, Lys-12, 34 to 37, and 54 to 55 contribute to the substrate site; these read TGTT and SG. The Proton donor/acceptor role is filled by Asp-60. Substrate is bound at residue His-87.

This sequence belongs to the methylglyoxal synthase family.

It carries out the reaction dihydroxyacetone phosphate = methylglyoxal + phosphate. Functionally, catalyzes the formation of methylglyoxal from dihydroxyacetone phosphate. The chain is Methylglyoxal synthase from Clostridium perfringens (strain 13 / Type A).